Consider the following 55-residue polypeptide: Large ribosomal subunit protein bL33 (55 aa).

Belongs to the bacterial ribosomal protein bL33 family.

The protein is Large ribosomal subunit protein bL33 of Rhodopseudomonas palustris (strain BisA53).